Here is a 200-residue protein sequence, read N- to C-terminus: MNNKKSTNVVWQETKIKRQNREKMLKQKGAVLWFTGLSGSGKSTVASALEKKLYEMGYLTYLLDGDNLRYGLNSDLGFKSEDRTENIRRVSEVAKLFADAGIITITTFISPFIEDRNNARKLLGKDFVEVYIDCPIEVCEKRDPKGIYKKARNGEIKNFTGIDSPYEKPEKPEITVETYKDTEEKCVDNIIEYLKQHKIL.

An ATP-binding site is contributed by 36 to 43 (GLSGSGKS). The active-site Phosphoserine intermediate is the S110.

Belongs to the APS kinase family.

The catalysed reaction is adenosine 5'-phosphosulfate + ATP = 3'-phosphoadenylyl sulfate + ADP + H(+). It participates in sulfur metabolism; hydrogen sulfide biosynthesis; sulfite from sulfate: step 2/3. Its function is as follows. Catalyzes the synthesis of activated sulfate. In Clostridium acetobutylicum (strain ATCC 824 / DSM 792 / JCM 1419 / IAM 19013 / LMG 5710 / NBRC 13948 / NRRL B-527 / VKM B-1787 / 2291 / W), this protein is Adenylyl-sulfate kinase.